A 364-amino-acid chain; its full sequence is N-acetyl-gamma-glutamyl-phosphate reductase (364 aa).

Cys157 is a catalytic residue.

It belongs to the NAGSA dehydrogenase family. Type 1 subfamily.

It localises to the cytoplasm. It catalyses the reaction N-acetyl-L-glutamate 5-semialdehyde + phosphate + NADP(+) = N-acetyl-L-glutamyl 5-phosphate + NADPH + H(+). It functions in the pathway amino-acid biosynthesis; L-arginine biosynthesis; N(2)-acetyl-L-ornithine from L-glutamate: step 3/4. Its function is as follows. Catalyzes the NADPH-dependent reduction of N-acetyl-5-glutamyl phosphate to yield N-acetyl-L-glutamate 5-semialdehyde. This Bifidobacterium longum (strain DJO10A) protein is N-acetyl-gamma-glutamyl-phosphate reductase.